The sequence spans 75 residues: Cytoplasmic envelopment protein 3 (75 aa).

Gly-2 carries N-myristoyl glycine; by host lipidation. Positions 53 to 65 are enriched in acidic residues; the sequence is EGLEYDEDSENDE. A disordered region spans residues 53–75; it reads EGLEYDEDSENDELLFLPNKKPN.

It belongs to the herpesviridae cytoplasmic envelopment protein 3 family. As to quaternary structure, interacts with BGLF2; this interaction is essential for the proper localization of each protein to the assembly complex and thus for the production of infectious virus. Myristoylation and palmitoylation (probably on one or more of the nearby cysteines at the N-terminus) enable membrane-binding and Golgi apparatus-specific targeting and are essential for efficient packaging. Post-translationally, phosphorylated. Phosphorylation does not seem to be required for recycling to the host Golgi apparatus. Packaging is selective for underphosphorylated forms.

The protein resides in the virion tegument. The protein localises to the virion membrane. It is found in the host cell membrane. It localises to the host Golgi apparatus membrane. Functionally, plays an important role in the cytoplasmic envelopment of tegument proteins and capsids during the assembly and egress processes. Also participates in viral entry at the fusion step probably by regulating the core fusion machinery. This Homo sapiens (Human) protein is Cytoplasmic envelopment protein 3.